The sequence spans 937 residues: von Willebrand factor (937 aa).

The first 22 residues, 1 to 22 (MFPTRLARLLLAVALTLPGALC), serve as a signal peptide directing secretion. Residues 23 to 762 (GEGALGKSSM…SSPLSHRSKR (740 aa)) constitute a propeptide that is removed on maturation. In terms of domain architecture, VWFD 1 spans 33 to 201 (ARCSLFGADF…ALSSEEQRCP (169 aa)). Disulfide bonds link C35–C162 and C57–C200. N-linked (GlcNAc...) asparagine glycans are attached at residues N99, N156, and N211. The TIL 1 domain occupies 294-347 (CPTGMEYKECVSPCHRTCRSLSITEVCREQCVDGCSCPEGQLLDEGRCVESTEC). A VWFD 2 domain is found at 385–559 (GECLITGQSH…NSWKLRADCE (175 aa)). 3 disulfide bridges follow: C387/C523, C409/C558, and C431/C439. The 56-residue stretch at 651 to 706 (CPHGQVYQQCGTPCNLTCRSLSHPDEECTEVCLEGCFCPPGLFLDETGSCVPKAQC) folds into the TIL 2 domain. The N-linked (GlcNAc...) asparagine glycan is linked to N665. The tract at residues 763 to 786 (SLSCRPPMVKVVCPADNPRAEGLE) is amino-terminal. Disulfide bonds link C766-C807 and C775-C803. Residues 787-832 (CTKTCQNYDLECMSTGCVSGCLPAPGMVRHENRCVALERCPCFHQG) form an E1 region. Residues 825–852 (RCPCFHQGREYAPGDRVKVDCNSCVCQD) are CX. The N-linked (GlcNAc...) asparagine glycan is linked to N856. The VWFD 3 domain maps to 864–937 (ASCSALGLAH…VEGGEIELFD (74 aa)). C913 and C920 are disulfide-bonded.

Multimeric. Interacts with F8. Post-translationally, all cysteine residues are involved in intrachain or interchain disulfide bonds. N- and O-glycosylated. As to expression, plasma.

Its subcellular location is the secreted. The protein localises to the extracellular space. The protein resides in the extracellular matrix. In terms of biological role, important in the maintenance of hemostasis, it promotes adhesion of platelets to the sites of vascular injury by forming a molecular bridge between sub-endothelial collagen matrix and platelet-surface receptor complex GPIb-IX-V. Also acts as a chaperone for coagulation factor VIII, delivering it to the site of injury, stabilizing its heterodimeric structure and protecting it from premature clearance from plasma. The protein is von Willebrand factor (VWF) of Bos taurus (Bovine).